Consider the following 407-residue polypeptide: Betaine--homocysteine S-methyltransferase 1 (407 aa).

Residues 11 to 314 enclose the Hcy-binding domain; sequence RGILERLNAG…YHIRAIAEEL (304 aa). 3 positions are modified to N6-succinyllysine: K40, K93, and K98. A Zn(2+)-binding site is contributed by C217. N6-succinyllysine is present on residues K232 and K241. 2 residues coordinate Zn(2+): C299 and C300. S330 is subject to Phosphoserine. N6-succinyllysine is present on residues K340 and K377.

In terms of assembly, homotetramer. The cofactor is Zn(2+). Highly expressed in liver and kidney (at protein level). Expressed at lower levels in testis, lung, cerebellum, skeletal muscle and pancreas (at protein level).

It is found in the cytoplasm. Its subcellular location is the cytosol. The protein resides in the nucleus. It catalyses the reaction L-homocysteine + glycine betaine = N,N-dimethylglycine + L-methionine. It functions in the pathway amine and polyamine degradation; betaine degradation; sarcosine from betaine: step 1/2. It participates in amino-acid biosynthesis; L-methionine biosynthesis via de novo pathway; L-methionine from L-homocysteine (BhmT route): step 1/1. Involved in the regulation of homocysteine metabolism. Converts betaine and homocysteine to dimethylglycine and methionine, respectively. This reaction is also required for the irreversible oxidation of choline. The sequence is that of Betaine--homocysteine S-methyltransferase 1 from Rattus norvegicus (Rat).